The sequence spans 307 residues: Elongation factor Ts (307 aa).

The interval 79-82 (TDFV) is involved in Mg(2+) ion dislocation from EF-Tu.

This sequence belongs to the EF-Ts family.

The protein resides in the cytoplasm. Its function is as follows. Associates with the EF-Tu.GDP complex and induces the exchange of GDP to GTP. It remains bound to the aminoacyl-tRNA.EF-Tu.GTP complex up to the GTP hydrolysis stage on the ribosome. In Sinorhizobium medicae (strain WSM419) (Ensifer medicae), this protein is Elongation factor Ts.